Here is a 510-residue protein sequence, read N- to C-terminus: Flagellin A (510 aa).

Belongs to the bacterial flagellin family. As to quaternary structure, heteromer of FlaA and FlaB. FlaB is located proximal to the hook while the remainder of the filament is composed of the predominant FlaA.

The protein resides in the secreted. The protein localises to the bacterial flagellum. Flagellin is the subunit protein which polymerizes to form the filaments of bacterial flagella. Important for motility and virulence. The chain is Flagellin A (flaA) from Helicobacter pylori (strain ATCC 700392 / 26695) (Campylobacter pylori).